Reading from the N-terminus, the 338-residue chain is MSRLTLALDVMGGDIGPRITIPASIKALEKDPMLSLLLFGDSQQINPLLEQVPSALKERLRVCHCSRVVENNQGLSYALRHSKGTSMRLAIEAVQKGEAQGCVSAGNTAALMGLSKVLLQPLKGIDRPALISLLPTMDGGRTVMLDLGANIDCNANNLYQFALMGAIFAENQLDLVFPRIALLNIGIEEIKGYKSIREAADLLTGNSSLNYIGFIEGNLLLNGKADVIVSDGFVGNIALKTLEGAAKNVISLIKGKSRNHLLKPLFNWLIKLLFKDSYQRLQKINPDQYNGASLIGLTSIVVKSHGAANIEAFNNAIHDAALQARQQIPEKILAGLQK.

Belongs to the PlsX family. Homodimer. Probably interacts with PlsY.

Its subcellular location is the cytoplasm. It catalyses the reaction a fatty acyl-[ACP] + phosphate = an acyl phosphate + holo-[ACP]. It participates in lipid metabolism; phospholipid metabolism. Catalyzes the reversible formation of acyl-phosphate (acyl-PO(4)) from acyl-[acyl-carrier-protein] (acyl-ACP). This enzyme utilizes acyl-ACP as fatty acyl donor, but not acyl-CoA. The polypeptide is Phosphate acyltransferase (Mannheimia succiniciproducens (strain KCTC 0769BP / MBEL55E)).